The chain runs to 942 residues: Cilia- and flagella-associated protein 69 (942 aa).

A compositionally biased stretch (low complexity) spans M1–A16. The disordered stretch occupies residues M1–P25.

As to expression, expressed in ciliated olfactory sensory neurons (at protein level). Expressed in testis, specifically in sperm (at protein level).

It localises to the cell projection. The protein localises to the cilium. The protein resides in the flagellum. Functionally, cilium- and flagellum-associated protein. In the olfactory epithelium, regulates the speed of activation and termination of the odor response and thus contributes to the robustness of olfactory transduction pathways. Required for sperm flagellum assembly and stability. The sequence is that of Cilia- and flagella-associated protein 69 from Mus musculus (Mouse).